A 1087-amino-acid chain; its full sequence is Transcription factor AP2-Z (1087 aa).

A DNA-binding region (AP2) is located at residues 586 to 682; that stretch reads GRVYKVIVRG…IKYNSVPDSL (97 aa).

It belongs to the AP2/ERF transcription factor family. AP2 subfamily.

It is found in the nucleus. It localises to the chromosome. In terms of biological role, transcription factor which binds the 5'-[TC][AC]TG[AT]AC[AG]-3' motif. During the mosquito vector stage, plays an essential role in the zygote for de novo transcription of genes required for ookinete formation. In Plasmodium berghei (strain Anka), this protein is Transcription factor AP2-Z.